Reading from the N-terminus, the 299-residue chain is Very long chain fatty acid elongase 5 (299 aa).

An N-acetylmethionine modification is found at Met-1. 7 consecutive transmembrane segments (helical) span residues 26–46 (WFLL…LLIV), 64–84 (ILQL…YELV), 112–132 (VLWW…FFIL), 139–158 (ITVL…WFVM), 168–187 (FGAT…YGLS), 205–225 (GQLV…FWPC), and 227–247 (FPLG…ALFT). Residues 274–299 (VAAVNGHTNSFPSLENSVKPRKQRKD) are disordered. A compositionally biased stretch (polar residues) spans 279 to 289 (GHTNSFPSLEN).

Belongs to the ELO family. ELOVL5 subfamily. As to quaternary structure, interacts with TECR.

It localises to the endoplasmic reticulum membrane. The protein resides in the cell projection. The protein localises to the dendrite. It catalyses the reaction a very-long-chain acyl-CoA + malonyl-CoA + H(+) = a very-long-chain 3-oxoacyl-CoA + CO2 + CoA. It carries out the reaction (6Z,9Z,12Z)-octadecatrienoyl-CoA + malonyl-CoA + H(+) = (8Z,11Z,14Z)-3-oxoeicosatrienoyl-CoA + CO2 + CoA. The enzyme catalyses (9Z,12Z,15Z)-octadecatrienoyl-CoA + malonyl-CoA + H(+) = (11Z,14Z,17Z)-3-oxoeicosatrienoyl-CoA + CO2 + CoA. The catalysed reaction is (9Z)-hexadecenoyl-CoA + malonyl-CoA + H(+) = 3-oxo-(11Z)-octadecenoyl-CoA + CO2 + CoA. It catalyses the reaction (9Z)-octadecenoyl-CoA + malonyl-CoA + H(+) = 3-oxo-(11Z)-eicosenoyl-CoA + CO2 + CoA. It carries out the reaction (11Z)-octadecenoyl-CoA + malonyl-CoA + H(+) = 3-oxo-(13Z)-eicosenoyl-CoA + CO2 + CoA. The enzyme catalyses (9Z,12Z)-octadecadienoyl-CoA + malonyl-CoA + H(+) = (11Z,14Z)-3-oxoicosa-11,14-dienoyl-CoA + CO2 + CoA. The catalysed reaction is (6Z,9Z,12Z,15Z)-octadecatetraenoyl-CoA + malonyl-CoA + H(+) = (8Z,11Z,14Z,17Z)-3-oxoicosatetraenoyl-CoA + CO2 + CoA. It catalyses the reaction (5Z,8Z,11Z,14Z)-eicosatetraenoyl-CoA + malonyl-CoA + H(+) = (7Z,10Z,13Z,16Z)-3-oxodocosatetraenoyl-CoA + CO2 + CoA. It carries out the reaction (5Z,8Z,11Z,14Z,17Z)-eicosapentaenoyl-CoA + malonyl-CoA + H(+) = 3-oxo-(7Z,10Z,13Z,16Z,19Z)-docosapentaenoyl-CoA + CO2 + CoA. It functions in the pathway lipid metabolism; polyunsaturated fatty acid biosynthesis. In terms of biological role, catalyzes the first and rate-limiting reaction of the four reactions that constitute the long-chain fatty acids elongation cycle. This endoplasmic reticulum-bound enzymatic process allows the addition of 2 carbons to the chain of long- and very long-chain fatty acids (VLCFAs) per cycle. Condensing enzyme that acts specifically toward polyunsaturated acyl-CoA with the higher activity toward C18:3(n-6) acyl-CoA. May participate in the production of monounsaturated and of polyunsaturated VLCFAs of different chain lengths that are involved in multiple biological processes as precursors of membrane lipids and lipid mediators. In conditions where the essential linoleic and alpha linoleic fatty acids are lacking it is also involved in the synthesis of Mead acid from oleic acid. In Mus musculus (Mouse), this protein is Very long chain fatty acid elongase 5.